Consider the following 180-residue polypeptide: UPF0340 protein RBAM_034070 (180 aa).

The protein belongs to the UPF0340 family.

The polypeptide is UPF0340 protein RBAM_034070 (Bacillus velezensis (strain DSM 23117 / BGSC 10A6 / LMG 26770 / FZB42) (Bacillus amyloliquefaciens subsp. plantarum)).